Consider the following 221-residue polypeptide: 7-cyano-7-deazaguanine synthase (221 aa).

Position 10-20 (10-20 (LSGGLDSTTCM)) interacts with ATP. Zn(2+) is bound by residues Cys188, Cys196, Cys199, and Cys202.

The protein belongs to the QueC family. Homodimer. The cofactor is Zn(2+).

The enzyme catalyses 7-carboxy-7-deazaguanine + NH4(+) + ATP = 7-cyano-7-deazaguanine + ADP + phosphate + H2O + H(+). It participates in purine metabolism; 7-cyano-7-deazaguanine biosynthesis. Catalyzes the ATP-dependent conversion of 7-carboxy-7-deazaguanine (CDG) to 7-cyano-7-deazaguanine (preQ(0)). The sequence is that of 7-cyano-7-deazaguanine synthase from Oceanobacillus iheyensis (strain DSM 14371 / CIP 107618 / JCM 11309 / KCTC 3954 / HTE831).